The primary structure comprises 316 residues: Cysteine synthase (316 aa).

N7 and R35 together coordinate hydrogen sulfide. K42 is modified (N6-(pyridoxal phosphate)lysine). Pyridoxal 5'-phosphate-binding positions include N72 and 177–181; that span reads GTGGS. A hydrogen sulfide-binding site is contributed by L268. S272 serves as a coordination point for pyridoxal 5'-phosphate.

This sequence belongs to the cysteine synthase/cystathionine beta-synthase family. Homodimer. The cofactor is pyridoxal 5'-phosphate.

It catalyses the reaction O-acetyl-L-serine + hydrogen sulfide = L-cysteine + acetate. Its pathway is amino-acid biosynthesis; L-cysteine biosynthesis; L-cysteine from L-serine: step 2/2. This Haemophilus influenzae (strain ATCC 51907 / DSM 11121 / KW20 / Rd) protein is Cysteine synthase (cysK).